The following is a 553-amino-acid chain: Imidazole glycerol phosphate synthase hisHF (553 aa).

The Glutamine amidotransferase type-1 domain maps to 3–223 (TVHLLDYVAG…QLHSVTLEDS (221 aa)). Catalysis depends on for GATase activity residues C81, H194, and E196. Residues 232 to 553 (LTRRIIACLD…FLVRRFEPDV (322 aa)) are cyclase. Residues D241 and D403 contribute to the active site.

This sequence in the C-terminal section; belongs to the HisA/HisF family.

The enzyme catalyses 5-[(5-phospho-1-deoxy-D-ribulos-1-ylimino)methylamino]-1-(5-phospho-beta-D-ribosyl)imidazole-4-carboxamide + L-glutamine = D-erythro-1-(imidazol-4-yl)glycerol 3-phosphate + 5-amino-1-(5-phospho-beta-D-ribosyl)imidazole-4-carboxamide + L-glutamate + H(+). The catalysed reaction is L-glutamine + H2O = L-glutamate + NH4(+). The protein operates within amino-acid biosynthesis; L-histidine biosynthesis; L-histidine from 5-phospho-alpha-D-ribose 1-diphosphate: step 5/9. IGPS catalyzes the conversion of PRFAR and glutamine to IGP, AICAR and glutamate. The glutaminase domain produces the ammonia necessary for the cyclase domain to produce IGP and AICAR from PRFAR. The ammonia is channeled to the active site of the cyclase domain. In Emericella nidulans (strain FGSC A4 / ATCC 38163 / CBS 112.46 / NRRL 194 / M139) (Aspergillus nidulans), this protein is Imidazole glycerol phosphate synthase hisHF (hisHF).